A 609-amino-acid chain; its full sequence is Granule-bound starch synthase 1, chloroplastic/amyloplastic (609 aa).

A chloroplast-targeting transit peptide spans 1–77 (MSALTTSQLA…SRRFPSVVVY (77 aa)). The disordered stretch occupies residues 29-67 (RHGFQGLKPRSPAGGDATSLSVTTSARATPKQQRSVQRG). The span at 46 to 66 (TSLSVTTSARATPKQQRSVQR) shows a compositional bias: polar residues. Lys97 is a binding site for ADP-alpha-D-glucose.

This sequence belongs to the glycosyltransferase 1 family. Bacterial/plant glycogen synthase subfamily.

Its subcellular location is the plastid. It localises to the chloroplast. The protein resides in the amyloplast. The catalysed reaction is an NDP-alpha-D-glucose + [(1-&gt;4)-alpha-D-glucosyl](n) = [(1-&gt;4)-alpha-D-glucosyl](n+1) + a ribonucleoside 5'-diphosphate + H(+). It participates in glycan biosynthesis; starch biosynthesis. In terms of biological role, required for the synthesis of amylose in endosperm. The sequence is that of Granule-bound starch synthase 1, chloroplastic/amyloplastic (WAXY) from Oryza glaberrima (African rice).